Consider the following 215-residue polypeptide: FMN-dependent NADH:quinone oxidoreductase (215 aa).

17–19 (SAS) is an FMN binding site.

Belongs to the azoreductase type 1 family. In terms of assembly, homodimer. It depends on FMN as a cofactor.

The enzyme catalyses 2 a quinone + NADH + H(+) = 2 a 1,4-benzosemiquinone + NAD(+). It carries out the reaction N,N-dimethyl-1,4-phenylenediamine + anthranilate + 2 NAD(+) = 2-(4-dimethylaminophenyl)diazenylbenzoate + 2 NADH + 2 H(+). Quinone reductase that provides resistance to thiol-specific stress caused by electrophilic quinones. In terms of biological role, also exhibits azoreductase activity. Catalyzes the reductive cleavage of the azo bond in aromatic azo compounds to the corresponding amines. The chain is FMN-dependent NADH:quinone oxidoreductase from Clostridium botulinum (strain Eklund 17B / Type B).